Here is a 354-residue protein sequence, read N- to C-terminus: Pyrimidine monooxygenase RutA (354 aa).

Residues 49–50 (IK), N115, E124, 140–141 (RY), and S189 each bind FMN.

The protein belongs to the NtaA/SnaA/DszA monooxygenase family. RutA subfamily.

It catalyses the reaction uracil + FMNH2 + NADH + O2 = (Z)-3-ureidoacrylate + FMN + NAD(+) + H2O + H(+). The enzyme catalyses thymine + FMNH2 + NADH + O2 = (Z)-2-methylureidoacrylate + FMN + NAD(+) + H2O + H(+). In terms of biological role, catalyzes the pyrimidine ring opening between N-3 and C-4 by an unusual flavin hydroperoxide-catalyzed mechanism, adding oxygen atoms in the process to yield ureidoacrylate peracid, that immediately reacts with FMN forming ureidoacrylate and FMN-N(5)-oxide. The FMN-N(5)-oxide reacts spontaneously with NADH to produce FMN. Requires the flavin reductase RutF to regenerate FMN in vivo. The sequence is that of Pyrimidine monooxygenase RutA from Caulobacter sp. (strain K31).